Consider the following 365-residue polypeptide: Peptide chain release factor 2 (365 aa).

The residue at position 252 (Q252) is an N5-methylglutamine.

It belongs to the prokaryotic/mitochondrial release factor family. Post-translationally, methylated by PrmC. Methylation increases the termination efficiency of RF2.

The protein localises to the cytoplasm. Peptide chain release factor 2 directs the termination of translation in response to the peptide chain termination codons UGA and UAA. This is Peptide chain release factor 2 from Yersinia enterocolitica serotype O:8 / biotype 1B (strain NCTC 13174 / 8081).